We begin with the raw amino-acid sequence, 282 residues long: Acetyl-coenzyme A carboxylase carboxyl transferase subunit beta (282 aa).

Positions 26–282 constitute a CoA carboxyltransferase N-terminal domain; that stretch reads QWVKCPETGE…IIRLLNLLME (257 aa).

The protein belongs to the AccD/PCCB family. Acetyl-CoA carboxylase is a heterohexamer composed of biotin carboxyl carrier protein (AccB), biotin carboxylase (AccC) and two subunits each of ACCase subunit alpha (AccA) and ACCase subunit beta (AccD).

The protein resides in the cytoplasm. It catalyses the reaction N(6)-carboxybiotinyl-L-lysyl-[protein] + acetyl-CoA = N(6)-biotinyl-L-lysyl-[protein] + malonyl-CoA. It participates in lipid metabolism; malonyl-CoA biosynthesis; malonyl-CoA from acetyl-CoA: step 1/1. Its function is as follows. Component of the acetyl coenzyme A carboxylase (ACC) complex. Biotin carboxylase (BC) catalyzes the carboxylation of biotin on its carrier protein (BCCP) and then the CO(2) group is transferred by the transcarboxylase to acetyl-CoA to form malonyl-CoA. The protein is Acetyl-coenzyme A carboxylase carboxyl transferase subunit beta of Salinibacter ruber (strain DSM 13855 / M31).